Consider the following 227-residue polypeptide: DNA repair protein RecO (227 aa).

Belongs to the RecO family.

Involved in DNA repair and RecF pathway recombination. This Pseudomonas putida (strain ATCC 47054 / DSM 6125 / CFBP 8728 / NCIMB 11950 / KT2440) protein is DNA repair protein RecO.